The following is a 608-amino-acid chain: MSAASSLAPQRYMQDMGGASNASDVLEELKNRFGPPGTDNPGGPMGVVQKTGDDLPTQWVSRNRVHEVLHYLKLKAERPYRMLYDLTAIDERTRVHREDQPASRFTVIYHLLSFERNADVCLKVALTDTDLRMPTITDIWPAANWYEREIWDMFGIVFDGHPHLRRILLPPWWQGHALRKDHPARATEMEPFHLSTEKEEAEQETLRFHPEEWGMRRTHDGTDFMFLNLGPNHPSVHGVFRIVLQLDGEEIIDAVPEIGFHHRGAEKMGERQSWHTYIPYTDRIDYLGGVMNNLPYVLAVEKLAGIEVPDRVKVMRVMMAEFFRIASHLVFYGTFTQDLGALSPVFFMFTDRERVFDVVEAICGGRMHPSWYRIGGVAQDLPNGWDRMVRDFLDYMPARLDEYDKIAVGNRILKARTRGVGGYSIDEAIEWGVTGPNLRACGFEWDFRKARPYSGYDQFEFDVPTGQHGDCYDRCAVRVQEIRQSLRIIDQCLENMPAGAHKADHPLTTPPLKKHTLHDIETLIDHFLGVSWGPVIPPGEAFVGIEATKGNNGYYLISDGNTTAYRVRIRTPSFPHLQMIPLISRGLMISDLIAILGSIDFVMADVDR.

The interval M1–E199 is NADH dehydrogenase I subunit C. Residues D223 to R608 are NADH dehydrogenase I subunit D.

It in the N-terminal section; belongs to the complex I 30 kDa subunit family. The protein in the C-terminal section; belongs to the complex I 49 kDa subunit family. As to quaternary structure, NDH-1 is composed of 13 different subunits. Subunits NuoB, CD, E, F, and G constitute the peripheral sector of the complex.

It is found in the cell inner membrane. It carries out the reaction a quinone + NADH + 5 H(+)(in) = a quinol + NAD(+) + 4 H(+)(out). In terms of biological role, NDH-1 shuttles electrons from NADH, via FMN and iron-sulfur (Fe-S) centers, to quinones in the respiratory chain. The immediate electron acceptor for the enzyme in this species is believed to be ubiquinone. Couples the redox reaction to proton translocation (for every two electrons transferred, four hydrogen ions are translocated across the cytoplasmic membrane), and thus conserves the redox energy in a proton gradient. The sequence is that of NADH-quinone oxidoreductase subunit C/D from Nitrosospira multiformis (strain ATCC 25196 / NCIMB 11849 / C 71).